The primary structure comprises 110 residues: Large ribosomal subunit protein uL22 (110 aa).

It belongs to the universal ribosomal protein uL22 family. Part of the 50S ribosomal subunit.

This protein binds specifically to 23S rRNA; its binding is stimulated by other ribosomal proteins, e.g. L4, L17, and L20. It is important during the early stages of 50S assembly. It makes multiple contacts with different domains of the 23S rRNA in the assembled 50S subunit and ribosome. Functionally, the globular domain of the protein is located near the polypeptide exit tunnel on the outside of the subunit, while an extended beta-hairpin is found that lines the wall of the exit tunnel in the center of the 70S ribosome. The chain is Large ribosomal subunit protein uL22 from Janthinobacterium sp. (strain Marseille) (Minibacterium massiliensis).